Here is a 498-residue protein sequence, read N- to C-terminus: ATP synthase subunit alpha 1 (498 aa).

Residue 164–171 (GNRQSGKT) participates in ATP binding.

It belongs to the ATPase alpha/beta chains family. In terms of assembly, F-type ATPases have 2 components, CF(1) - the catalytic core - and CF(0) - the membrane proton channel. CF(1) has five subunits: alpha(3), beta(3), gamma(1), delta(1), epsilon(1). CF(0) has three main subunits: a(1), b(2) and c(9-12). The alpha and beta chains form an alternating ring which encloses part of the gamma chain. CF(1) is attached to CF(0) by a central stalk formed by the gamma and epsilon chains, while a peripheral stalk is formed by the delta and b chains.

The protein resides in the cell membrane. It carries out the reaction ATP + H2O + 4 H(+)(in) = ADP + phosphate + 5 H(+)(out). Produces ATP from ADP in the presence of a proton gradient across the membrane. The alpha chain is a regulatory subunit. The polypeptide is ATP synthase subunit alpha 1 (Listeria welshimeri serovar 6b (strain ATCC 35897 / DSM 20650 / CCUG 15529 / CIP 8149 / NCTC 11857 / SLCC 5334 / V8)).